The primary structure comprises 66 residues: MGMRMMFTVFLLVVLATTVVSSTSGRREFRGRNAAAKASDLVSLTDKKRGCCSDPRCNYDHPEICG.

Positions 1–25 (MGMRMMFTVFLLVVLATTVVSSTSG) are cleaved as a signal peptide. A propeptide spanning residues 26 to 47 (RREFRGRNAAAKASDLVSLTDK) is cleaved from the precursor. Intrachain disulfides connect C51–C57 and C52–C65. The interval 53 to 55 (SDP) is ser-Xaa-Pro motif, crucial for potent interaction with nAChR. Key region for inhibition of alpha-9-alpha-10/CHRNA9-CHRNA10 nAChR regions lie at residues 54-56 (DPR) and 60-64 (DHPEI). 4-hydroxyproline is present on P55. Residue E63 is modified to 4-carboxyglutamate. C65 carries the post-translational modification Cysteine amide.

This sequence belongs to the conotoxin A superfamily. Vc1.1 is described as having no post-translational modifications (except C-terminal amidation), whereas Vc1a contains a hydroxyproline at Pro-55 and a 4-carboxyglutamate at Glu-63 (and a C-terminal amidation). Post-translationally, hydroxylation of Pro-55 is not important for inhibition of alpha-9-alpha-10/CHRNA9-CHRNA10 nAChRs, since [P6O]Vc1.1 (Pro-55 hydroxylated) shows similar inhibition than native toxin (IC(50)=99.1 nM). In contrast, hydroxylation of Pro-55 seems to impair inhibition of HVA calcium channel currents, since [P6O]Vc1.1 has no effect on HVA calcium channel currents. In vivo, hydroxylation of Pro-55 seems to induce the loss of analgesic effects in rat models of neuropathic pain, since [P6O]Vc1.1 has no effect on mechanical allodynia. In terms of processing, gamma-carboxylation of Glu-63 is not important for inhibition of alpha-9-alpha-10/CHRNA9-CHRNA10 nAChRs, since [E14gamma]Vc1.1 (carboxyglutamate at Glu-63) shows similar inhibition than native toxin (IC(50)=65.3 nM). In contrast, gamma-carboxylation of Glu-63 seems to impair inhibition of HVA calcium channel currents, since [E14gamma]Vc1.1 has no effect on HVA calcium channel currents. Non-native isomers 'ribbon' (with disulfide connectivity C1-C4; C2-C3) and 'beads' (with disulfide connectivity C1-C2; C3-C4) of Vc1.1 also inhibit HVA calcium channel currents in rat DRG neurons (20-30% inhibition at 1 uM toxin). It has been shown that both reduced and alkylated Vc1.1 have no effect on HVA calcium channel currents. The observed activity can be attributed to specific isomers. Post-translationally, [C3S]Vc1.1(1-8) mutant is C-terminally amidated. Expressed by the venom duct.

It is found in the secreted. Alpha-conotoxins act on postsynaptic membranes, they bind to the nicotinic acetylcholine receptors (nAChR) and thus inhibit them. This toxin (native toxin Vc1a; hydroxylated and gamma-carboxylated) blocks alpha-9-alpha-10/CHRNA9-CHRNA10 nAChRs (IC(50)=62.9 nM). In contrast to the non-post-translationally modified analog Vc1.1, Vc1a does not inhibit high voltage-activated (HVA) calcium channel currents. In vivo, in contrast to Vc1.1, Vc1a does not show analgesic effects in rat models of neuropathic pain. Its function is as follows. The synthetic peptide Vc1.1 (a non-hydroxylated and non-gamma-carboxylated analog of Vc1a) has two types of targets. It blocks alpha-9-alpha-10/CHRNA9-CHRNA10 nAChRs (on rat receptors, IC(50)=19-109 nM) (with preference for rat over human receptors) and inhibits high voltage-activated (HVA) calcium channel (Cav2.2, Cav2.3) currents by acting on GABA(B) receptors (GABBR1 and GABBR2) (IC(50)=1.7 nM). It also shows moderate inhibition on alpha-6/alpha-3-beta-2-beta-3 (CHRNA6/CHRNA3-CHRNB2-CHRNB3) (IC(50)=140 nM) and alpha-6/alpha-3-beta-4 (CHRNA6/CHRNA3-CHRNB4) (IC(50)=980 nM). On alpha-9-alpha-10/CHRNA9-CHRNA10 nAChR, it most likely interacts with the alpha-10(+)/alpha-9(-)interface of the receptor. In vivo, it acts as a powerful analgesic in rat models of neuropathic pain. This Conus victoriae (Queen Victoria cone) protein is Alpha-conotoxin Vc1a.